Consider the following 284-residue polypeptide: uncharacterized protein (284 aa).

10 N-linked (GlcNAc...) asparagine; by host glycosylation sites follow: asparagine 79, asparagine 102, asparagine 111, asparagine 147, asparagine 162, asparagine 174, asparagine 196, asparagine 211, asparagine 228, and asparagine 234. Residues 239 to 259 (AFTYGSWGVAMLLFAAVMVLV) form a helical membrane-spanning segment.

The protein belongs to the RL11 family.

Its subcellular location is the membrane. This is an uncharacterized protein from Human cytomegalovirus (strain AD169) (HHV-5).